We begin with the raw amino-acid sequence, 87 residues long: Small ribosomal subunit protein bS20 (87 aa).

This sequence belongs to the bacterial ribosomal protein bS20 family.

Binds directly to 16S ribosomal RNA. The polypeptide is Small ribosomal subunit protein bS20 (Clostridium beijerinckii (strain ATCC 51743 / NCIMB 8052) (Clostridium acetobutylicum)).